A 610-amino-acid polypeptide reads, in one-letter code: Scarecrow-like protein 11 (610 aa).

Disordered regions lie at residues 32 to 54 (NNLF…PPTV), 98 to 159 (QQSP…RRNK), and 186 to 220 (QEEE…HKTN). Low complexity-rich tracts occupy residues 41 to 52 (SQNQSSPNDSPP) and 99 to 119 (QSPE…GDQD). Polar residues-rich tracts occupy residues 123-137 (PSTT…SSGE) and 209-220 (GSSNKSKTHKTN). Residues 215–598 (KTHKTNTVDL…RVIYAFSCWK (384 aa)) form the GRAS domain. The segment at 222 to 283 (VDLRSLLTQC…ARITGNISPP (62 aa)) is leucine repeat I (LRI). The segment at 302-367 (YKLFVHTCPI…GGPPMLRVTG (66 aa)) is VHIID. The VHIID signature appears at 333-337 (LHIVD). The interval 383–415 (ETGRRLKRFCDQFNVPFEFNFIAKKWETITLDE) is leucine repeat II (LRII). The tract at residues 424-520 (TVVNCIHRLQ…RELLVRDAMS (97 aa)) is PFYRE. An SAW region spans residues 523-598 (SCEGAERFAR…RVIYAFSCWK (76 aa)).

The protein belongs to the GRAS family. Highly expressed in roots and at lower levels in leaves and sepals. Expressed in siliques.

The protein resides in the nucleus. Its function is as follows. Probable transcription factor involved in plant development. The sequence is that of Scarecrow-like protein 11 (SCL11) from Arabidopsis thaliana (Mouse-ear cress).